A 136-amino-acid chain; its full sequence is Small ribosomal subunit protein bS16 (136 aa).

Over residues 114–123 (TLKARRRRAK) the composition is skewed to basic residues. The disordered stretch occupies residues 114-136 (TLKARRRRAKKEAEAASASSAEG).

It belongs to the bacterial ribosomal protein bS16 family.

The sequence is that of Small ribosomal subunit protein bS16 from Chlorobium chlorochromatii (strain CaD3).